The primary structure comprises 91 residues: Small ribosomal subunit protein uS19 (91 aa).

This sequence belongs to the universal ribosomal protein uS19 family.

In terms of biological role, protein S19 forms a complex with S13 that binds strongly to the 16S ribosomal RNA. The chain is Small ribosomal subunit protein uS19 from Azotobacter vinelandii (strain DJ / ATCC BAA-1303).